The chain runs to 195 residues: Putative kinase protein 143R (195 aa).

An ATP-binding site is contributed by 8 to 16; it reads GIIGAGKST. The substrate site is built by E31, Y43, and Q54. E78 (proton acceptor) is an active-site residue. Residues R79 and E142 each contribute to the substrate site.

Belongs to the DCK/DGK family.

This is Putative kinase protein 143R from Acheta domesticus (House cricket).